The sequence spans 209 residues: Uracil phosphoribosyltransferase (209 aa).

5-phospho-alpha-D-ribose 1-diphosphate-binding positions include Arg79, Arg104, and 131 to 139 (DPMLATGNS). Uracil contacts are provided by residues Ile194 and 199–201 (GDA). Asp200 is a 5-phospho-alpha-D-ribose 1-diphosphate binding site.

This sequence belongs to the UPRTase family. Mg(2+) serves as cofactor.

It catalyses the reaction UMP + diphosphate = 5-phospho-alpha-D-ribose 1-diphosphate + uracil. It participates in pyrimidine metabolism; UMP biosynthesis via salvage pathway; UMP from uracil: step 1/1. Allosterically activated by GTP. Its function is as follows. Catalyzes the conversion of uracil and 5-phospho-alpha-D-ribose 1-diphosphate (PRPP) to UMP and diphosphate. In Delftia acidovorans (strain DSM 14801 / SPH-1), this protein is Uracil phosphoribosyltransferase.